A 630-amino-acid chain; its full sequence is MDIKGQFWNDDDSEGDNESEEFLYGVQGSCAADLYRHPQLDADIEAVKEIYSENSVSIREYGTIDDVDLDLHINISFLDEEVSTAWKVLRTEPIVLRLRFSLSQYLDGPEPSIEVFQPSNKEGFGLGLQLKKILCMFTSQQWKHLSNDFLKTQQEKRHSWFKASGTIKKFRAGLSIFSPIPKSPSFPIIQDSMLKGKLGVPELRVGRLMNRSISCTMKNPKVEVFGYPPSPQAGLLCPQHVGLPPPARTSPLVSGHCKNIPTLEYGFLVQIMKYAEQRIPTLNEYCVVCDEQHVFQNGSMLKPAVCTRELCVFSFYTLGVMSGAAEEVATGAEVVDLQVAMCRAALESPRKSIIFEPYPSVVDPTDPKTLAFNPKKKNYERLQKALDSVMSIREMTQGSYLEIKKQMDKLDPLAHPLLQWIISSNRSHIVKLPLSRLKFMHTSHQFLLLSSPPAKEARFRTAKKLYGSTFAFHGSHIENWHSILRNGLVNASYTKLQLHGAAYGKGIYLSPISSISFGYSGMGKGQHRMPSKDELVQRYNRMNTIPQTRSIQSRFLQSRNLNCIALCEVITSKDLQKHGNIWVCPVSDHVCTRFFFVYEDGQVGDANINTQDPKIQKEIMRVIGTQVYTN.

Residue cysteine 237 is modified to ADP-ribosylcysteine. Residues 394-620 (EMTQGSYLEI…QDPKIQKEIM (227 aa)) enclose the PARP catalytic domain. Aspartate 600 bears the ADP-ribosyl aspartic acid mark.

Belongs to the ARTD/PARP family. In terms of processing, auto-mono-ADP-ribosylated.

It carries out the reaction L-aspartyl-[protein] + NAD(+) = 4-O-(ADP-D-ribosyl)-L-aspartyl-[protein] + nicotinamide. It catalyses the reaction L-cysteinyl-[protein] + NAD(+) = S-(ADP-D-ribosyl)-L-cysteinyl-[protein] + nicotinamide + H(+). Its function is as follows. Mono-ADP-ribosyltransferase that mediates mono-ADP-ribosylation of target proteins. This chain is Protein mono-ADP-ribosyltransferase PARP6, found in Mus musculus (Mouse).